We begin with the raw amino-acid sequence, 249 residues long: MLIIPAIDLKDGHCVRLKQGIMENATVFSENPETVALHWLDNGARQLHLVDLNGAFAGKPKNGEAIRAIVEAVDGRIPIQLGGGIRDLETIEYYLDNGITYVIIGTAAVKVPGFLHDACYAFPGQIMVGLDAKSGKVAVDGWSKVTGHDVIDLAKKFQDYGVEAIIHTDIGRDGMLSGLNIEATVELAQALTIPVIASGGVTNLDDIRKLCEVQSEGITGVITGRAIYQGSLDFKEAQALADQLDAATI.

The active-site Proton acceptor is the aspartate 8. The active-site Proton donor is aspartate 131.

The protein belongs to the HisA/HisF family.

The protein resides in the cytoplasm. The catalysed reaction is 1-(5-phospho-beta-D-ribosyl)-5-[(5-phospho-beta-D-ribosylamino)methylideneamino]imidazole-4-carboxamide = 5-[(5-phospho-1-deoxy-D-ribulos-1-ylimino)methylamino]-1-(5-phospho-beta-D-ribosyl)imidazole-4-carboxamide. It functions in the pathway amino-acid biosynthesis; L-histidine biosynthesis; L-histidine from 5-phospho-alpha-D-ribose 1-diphosphate: step 4/9. The protein is 1-(5-phosphoribosyl)-5-[(5-phosphoribosylamino)methylideneamino] imidazole-4-carboxamide isomerase of Nitrosomonas europaea (strain ATCC 19718 / CIP 103999 / KCTC 2705 / NBRC 14298).